The primary structure comprises 330 residues: AH receptor-interacting protein (330 aa).

Residue serine 43 is modified to Phosphoserine. The region spanning 54-146 (RVRGKPMELI…DLDALQQNPQ (93 aa)) is the PPIase FKBP-type domain. TPR repeat units follow at residues 179–212 (VPLI…LKNL), 231–264 (TPLL…YDDN), and 265–298 (VKAY…DPAL).

As to quaternary structure, interacts with RET in the pituitary gland; this interaction prevents the formation of the AIP-survivin complex.

The protein localises to the cytoplasm. Its function is as follows. May play a positive role in AHR-mediated (aromatic hydrocarbon receptor) signaling, possibly by influencing its receptivity for ligand and/or its nuclear targeting. In terms of biological role, cellular negative regulator of the hepatitis B virus (HBV) X protein. This chain is AH receptor-interacting protein (AIP), found in Chlorocebus aethiops (Green monkey).